Consider the following 315-residue polypeptide: NADH-cytochrome b5 reductase-like (315 aa).

Residues arginine 19 to lysine 55 form the Oxidoreductase-like domain. In terms of domain architecture, FAD-binding FR-type spans glutamate 75 to lysine 177. Residues glutamate 157–glycine 172 and glycine 182–threonine 214 contribute to the FAD site.

It belongs to the flavoprotein pyridine nucleotide cytochrome reductase family. FAD serves as cofactor.

The catalysed reaction is 2 Fe(III)-[cytochrome b5] + NADH = 2 Fe(II)-[cytochrome b5] + NAD(+) + H(+). In terms of biological role, NADH-cytochrome b5 reductases are involved in desaturation and elongation of fatty acids, cholesterol biosynthesis, drug metabolism, and, in erythrocyte, methemoglobin reduction. The protein is NADH-cytochrome b5 reductase-like (CYB5RL) of Homo sapiens (Human).